A 536-amino-acid chain; its full sequence is Portal protein (536 aa).

This sequence belongs to the podoviridae portal protein family. In terms of assembly, homododecamer. Interacts with major capsid protein. Interacts with the tail tube protein gp11. Interacts with the terminase large subunit. Interacts with the internal virion protein gp14.

It localises to the virion. Forms the portal vertex of the capsid. This portal plays critical roles in head assembly, genome packaging, neck/tail attachment, and genome ejection. The portal protein multimerizes as a single ring-shaped homododecamer arranged around a central channel. The sequence is that of Portal protein from Escherichia phage T7 (Bacteriophage T7).